The sequence spans 338 residues: Fructose-1,6-bisphosphatase class 1 (338 aa).

Mg(2+) is bound by residues Glu-92, Asp-114, Leu-116, and Asp-117. Residues 117–120 and Asn-210 each bind substrate; that span reads DGSS. Position 284 (Glu-284) interacts with Mg(2+).

The protein belongs to the FBPase class 1 family. As to quaternary structure, homotetramer. Mg(2+) serves as cofactor.

The protein localises to the cytoplasm. It carries out the reaction beta-D-fructose 1,6-bisphosphate + H2O = beta-D-fructose 6-phosphate + phosphate. Its pathway is carbohydrate biosynthesis; gluconeogenesis. The chain is Fructose-1,6-bisphosphatase class 1 from Halorhodospira halophila (strain DSM 244 / SL1) (Ectothiorhodospira halophila (strain DSM 244 / SL1)).